The chain runs to 227 residues: GTP:AMP phosphotransferase AK3, mitochondrial (227 aa).

Residues glycine 17, glycine 19, lysine 20, glycine 21, and threonine 22 each contribute to the GTP site. N6-succinyllysine is present on lysine 20. The residue at position 34 (lysine 34) is an N6-acetyllysine. Serine 37 carries the phosphoserine modification. The tract at residues serine 37–isoleucine 66 is NMP. 2 residues coordinate AMP: serine 38 and arginine 43. Residue lysine 57 is modified to N6-succinyllysine. AMP is bound at residue lysine 64. N6-acetyllysine; alternate is present on residues lysine 64 and lysine 80. An N6-succinyllysine; alternate mark is found at lysine 64 and lysine 80. Residues glycine 91, arginine 94, and glutamine 98 each coordinate AMP. The interval alanine 127–aspartate 164 is LID. Positions 128, 138, 139, 161, and 172 each coordinate GTP. Lysine 174 and lysine 189 each carry N6-acetyllysine; alternate. N6-succinyllysine; alternate is present on residues lysine 174 and lysine 189. Position 201 (threonine 201) interacts with GTP. Lysine 203 is subject to N6-acetyllysine.

The protein belongs to the adenylate kinase family. AK3 subfamily. Monomer.

It localises to the mitochondrion matrix. The enzyme catalyses a ribonucleoside 5'-triphosphate + AMP = a ribonucleoside 5'-diphosphate + ADP. The catalysed reaction is GTP + AMP = GDP + ADP. It catalyses the reaction ITP + AMP = IDP + ADP. In terms of biological role, mitochondrial adenylate kinase with a specific GTP:AMP phosphotransferase activity. Could also use ITP as phosphate donor. Its physiological function is to recycle GTP into GDP which is necessary for the TCA cycle in the mitochondrial matrix. In Pongo abelii (Sumatran orangutan), this protein is GTP:AMP phosphotransferase AK3, mitochondrial.